A 359-amino-acid chain; its full sequence is S-adenosylmethionine-dependent nucleotide dehydratase RSAD2 (359 aa).

Residues 43 to 67 (QTPARKISRPESRTSKQKEGSRAPF) form a disordered region. Basic and acidic residues predominate over residues 50 to 63 (SRPESRTSKQKEGS). The region spanning 67-287 (FTTPSSVNYH…LERHQSIQCL (221 aa)) is the Radical SAM core domain. Positions 81, 85, and 88 each coordinate [4Fe-4S] cluster.

It belongs to the radical SAM superfamily. RSAD2 family. The cofactor is [4Fe-4S] cluster.

Its subcellular location is the endoplasmic reticulum membrane. In terms of biological role, interferon-inducible iron-sulfur (4FE-4S) cluster-binding antiviral protein which plays a major role in the cell antiviral state induced by type I and type II interferon. This chain is S-adenosylmethionine-dependent nucleotide dehydratase RSAD2, found in Danio rerio (Zebrafish).